Here is a 312-residue protein sequence, read N- to C-terminus: MQEFLIPAKPDLQAARESWLKMLARERRLSPETVEAYERDTRQFLHFLTGHCGGSPGISDIANLRPADLRGFLAARRNAGAGARTLGRGLAGIRSLLRFLERRGLVNAAGAAALRAPRQPKSLPKPLTASDAKQVVSVEGQLAEEPWIAARNAAVLTLLYGSGLRISEALGLAGADLASETDTVLRVTGKGGKTRLVPVLPVALRAIAEYRRLCPYHLDPKGLLFRGARGGPLNPAIIQRDMAKLRSALNLPDTATPHALRHSFATHLLGRGGDLRTIQELLGHASLSTTQIYTGVDTARLLEIYESAHPRA.

The Core-binding (CB) domain maps to 10–101 (PDLQAARESW…GIRSLLRFLE (92 aa)). The 185-residue stretch at 122-306 (SLPKPLTASD…DTARLLEIYE (185 aa)) folds into the Tyr recombinase domain. Catalysis depends on residues arginine 165, lysine 190, histidine 258, arginine 261, and histidine 284. Tyrosine 293 functions as the O-(3'-phospho-DNA)-tyrosine intermediate in the catalytic mechanism.

The protein belongs to the 'phage' integrase family. XerC subfamily. As to quaternary structure, forms a cyclic heterotetrameric complex composed of two molecules of XerC and two molecules of XerD.

It is found in the cytoplasm. In terms of biological role, site-specific tyrosine recombinase, which acts by catalyzing the cutting and rejoining of the recombining DNA molecules. The XerC-XerD complex is essential to convert dimers of the bacterial chromosome into monomers to permit their segregation at cell division. It also contributes to the segregational stability of plasmids. The protein is Tyrosine recombinase XerC of Mesorhizobium japonicum (strain LMG 29417 / CECT 9101 / MAFF 303099) (Mesorhizobium loti (strain MAFF 303099)).